A 115-amino-acid polypeptide reads, in one-letter code: Large ribosomal subunit protein bL19 (115 aa).

This sequence belongs to the bacterial ribosomal protein bL19 family.

This protein is located at the 30S-50S ribosomal subunit interface and may play a role in the structure and function of the aminoacyl-tRNA binding site. The chain is Large ribosomal subunit protein bL19 from Caldanaerobacter subterraneus subsp. tengcongensis (strain DSM 15242 / JCM 11007 / NBRC 100824 / MB4) (Thermoanaerobacter tengcongensis).